Reading from the N-terminus, the 127-residue chain is Apolipoprotein C-IV (127 aa).

An N-terminal signal peptide occupies residues 1-27 (MSLLRNRLQDLPALCLCVLVLACIGAC).

This sequence belongs to the apolipoprotein C4 family.

It localises to the secreted. Its function is as follows. May participate in lipoprotein metabolism. The sequence is that of Apolipoprotein C-IV (APOC4) from Papio anubis (Olive baboon).